The following is an 829-amino-acid chain: MMLLGSPSSGGYGGKFAGASPAGGTTTMAPSAKQPSSRAPPPGITGGRNDLRILSPAAAAAAVGGLEMKKPEAEGIAESLQATHRKELEASIRKQLQGVELSPSPYDTAWVAMVPLRGSSHNPSFPQCVDWILENQWDDGSWSIDGSISTANKDVLSSTLACVLALNKWNVGREHIRRGLSFIGRNFSIAMDDQAVAPIGFGITFPAMLTLANGSGLEVPVRQNDIDSLNHLREMKIQREAGNHSRGRKAYMAYLAEGFGNLLEWDEIMMFQRKNGSLFNCPSSTAGALANYHDDKALQYLQSLVNKFDGVVPTLYPLNIYCQLSMVDALENMGISQYFASEIKSILDMTYSSWLGKDEEIMLDVTTCAMAFRLLRMNGYDVSSDELSHVAGASGFRDSLQGYLNDRKSVLEVYKTSKHSISENDLILDSIGSWSGSLLKEMLCSNGKGTPGREEIEFALKYPFYSTLERLVHRKNIVLFDAKGSQMLKTECMPVHDSQDFLALAVDDFCISQSNYQNELNYLESWVKDNRLDQLHFARQKITYCYLSGAATTFRPEMGYARTSWARTAWLTAVIDDLFDVGGLEQEQENLLALMEKWEEPGEDEYYSEDVKIVFQALYNTVNEIGAKASALQGHDVTKYLVDVWLHVVRCMKVEAEWQRSQHLPTFEEYMESGMVSLGQGCTVMSALFLIGEKLPEGIVELEEYDELFRLMGTCGRLLNDIRGIEREESDGKMTNGVSLLVHASGGSMSVDEAKTEVMKRIDASRRKLLSLVVSEQEGPIPRPCKQLFWKMCKILHLFYYQTDGFSSPKEMVSAVDAVINEPLQLRLL.

The interval 1-50 is disordered; that stretch reads MMLLGSPSSGGYGGKFAGASPAGGTTTMAPSAKQPSSRAPPPGITGGRND. The span at 23-37 shows a compositional bias: polar residues; that stretch reads GGTTTMAPSAKQPSS. 4 residues coordinate Mg(2+): Asp-576, Asp-580, Asn-720, and Glu-728. The short motif at 576 to 580 is the DDXXD motif element; sequence DDLFD.

Belongs to the terpene synthase family. Mg(2+) serves as cofactor. In terms of tissue distribution, expressed in roots and stems.

It carries out the reaction ent-copalyl diphosphate = ent-cassa-12,15-diene + diphosphate. Its function is as follows. Involved in phytocassane phytoalexins biosynthesis. Catalyzes the conversion of ent-copalyl diphosphate to the phytoalexin precursor ent-cassa-12,15-diene. The polypeptide is Ent-cassa-12,15-diene synthase (KSL7) (Oryza sativa subsp. japonica (Rice)).